Here is a 286-residue protein sequence, read N- to C-terminus: Peroxisomal membrane protein pex14 (286 aa).

An SH3-binding motif is present at residues 61 to 69 (TSNFVSRDW). Positions 122–214 (KILENLDEQT…REISSLRCLQ (93 aa)) form a coiled coil. The interval 218 to 239 (KKDDTFATTSNSSIPVLENPLD) is disordered.

The protein belongs to the peroxin-14 family. In terms of assembly, interacts with PEX13 (via SH3 domain); forming the PEX13-PEX14 docking complex. Interacts with PEX5 (via WxxxF/Y motifs).

Its subcellular location is the peroxisome membrane. Functionally, component of the PEX13-PEX14 docking complex, a translocon channel that specifically mediates the import of peroxisomal cargo proteins bound to PEX5 receptor. The PEX13-PEX14 docking complex forms a large import pore which can be opened to a diameter of about 9 nm. Mechanistically, PEX5 receptor along with cargo proteins associates with the PEX14 subunit of the PEX13-PEX14 docking complex in the cytosol, leading to the insertion of the receptor into the organelle membrane with the concomitant translocation of the cargo into the peroxisome matrix. This Schizosaccharomyces pombe (strain 972 / ATCC 24843) (Fission yeast) protein is Peroxisomal membrane protein pex14 (pex14).